Consider the following 451-residue polypeptide: Phosphoglucosamine mutase (451 aa).

The Phosphoserine intermediate role is filled by serine 102. Mg(2+) is bound by residues serine 102, aspartate 242, aspartate 244, and aspartate 246. At serine 102 the chain carries Phosphoserine.

The protein belongs to the phosphohexose mutase family. Mg(2+) serves as cofactor. In terms of processing, activated by phosphorylation.

It carries out the reaction alpha-D-glucosamine 1-phosphate = D-glucosamine 6-phosphate. In terms of biological role, catalyzes the conversion of glucosamine-6-phosphate to glucosamine-1-phosphate. This is Phosphoglucosamine mutase from Staphylococcus aureus (strain USA300).